A 445-amino-acid chain; its full sequence is CBL-interacting protein kinase 3 (445 aa).

The 256-residue stretch at 19–274 (YELGRAIGQG…TSQVLQDQWF (256 aa)) folds into the Protein kinase domain. Residues 25-33 (IGQGTFAKV) and lysine 48 contribute to the ATP site. The active-site Proton acceptor is the aspartate 142. The segment at 160–189 (DFGLSAISEQVKADGLLHTTCGTPNYVAPE) is activation loop. The 28-residue stretch at 309 to 336 (AMEEQPTLMNAFELISLNKGLNLDNFFE) folds into the NAF domain. Positions 342-371 (KRETRFTSQCPPKEIINRIEEAANLLGFNI) are PPI.

The protein belongs to the protein kinase superfamily. CAMK Ser/Thr protein kinase family. SNF1 subfamily. The cofactor is Mn(2+).

The enzyme catalyses L-seryl-[protein] + ATP = O-phospho-L-seryl-[protein] + ADP + H(+). It catalyses the reaction L-threonyl-[protein] + ATP = O-phospho-L-threonyl-[protein] + ADP + H(+). In terms of biological role, CIPK serine-threonine protein kinases interact with CBL proteins. Binding of a CBL protein to the regulatory NAF domain of CIPK protein lead to the activation of the kinase in a calcium-dependent manner. The polypeptide is CBL-interacting protein kinase 3 (CIPK3) (Oryza sativa subsp. japonica (Rice)).